A 123-amino-acid polypeptide reads, in one-letter code: Small ribosomal subunit protein uS13 (123 aa).

The segment at 96–123 (LPVRGQRTKTNARTRKGPKKTVGARRKK) is disordered.

Belongs to the universal ribosomal protein uS13 family. In terms of assembly, part of the 30S ribosomal subunit. Forms a loose heterodimer with protein S19. Forms two bridges to the 50S subunit in the 70S ribosome.

Its function is as follows. Located at the top of the head of the 30S subunit, it contacts several helices of the 16S rRNA. In the 70S ribosome it contacts the 23S rRNA (bridge B1a) and protein L5 of the 50S subunit (bridge B1b), connecting the 2 subunits; these bridges are implicated in subunit movement. Contacts the tRNAs in the A and P-sites. In Desulforamulus reducens (strain ATCC BAA-1160 / DSM 100696 / MI-1) (Desulfotomaculum reducens), this protein is Small ribosomal subunit protein uS13.